We begin with the raw amino-acid sequence, 407 residues long: Imidazolonepropionase (407 aa).

Fe(3+) contacts are provided by histidine 68 and histidine 70. Residues histidine 68 and histidine 70 each coordinate Zn(2+). 4-imidazolone-5-propanoate contacts are provided by arginine 77, tyrosine 140, and histidine 173. Tyrosine 140 contributes to the N-formimidoyl-L-glutamate binding site. Position 238 (histidine 238) interacts with Fe(3+). Histidine 238 is a binding site for Zn(2+). Glutamine 241 is a binding site for 4-imidazolone-5-propanoate. Residue aspartate 313 participates in Fe(3+) binding. Position 313 (aspartate 313) interacts with Zn(2+). N-formimidoyl-L-glutamate contacts are provided by asparagine 315 and glycine 317. Threonine 318 contacts 4-imidazolone-5-propanoate.

This sequence belongs to the metallo-dependent hydrolases superfamily. HutI family. Zn(2+) is required as a cofactor. It depends on Fe(3+) as a cofactor.

Its subcellular location is the cytoplasm. The enzyme catalyses 4-imidazolone-5-propanoate + H2O = N-formimidoyl-L-glutamate. Its pathway is amino-acid degradation; L-histidine degradation into L-glutamate; N-formimidoyl-L-glutamate from L-histidine: step 3/3. In terms of biological role, catalyzes the hydrolytic cleavage of the carbon-nitrogen bond in imidazolone-5-propanoate to yield N-formimidoyl-L-glutamate. It is the third step in the universal histidine degradation pathway. In Burkholderia mallei (strain ATCC 23344), this protein is Imidazolonepropionase.